A 454-amino-acid chain; its full sequence is MSRPTVSLIVLAAGQGTRMNSDLPKVLHRVGAAPMLHHALRAGQSLEPERVVVVAGHGAEQVARAARAFDETVEVVVQAEQLGTAHAVAQAAPLLADAPGEVVVLYGDTPFIRPETLERMIEMRARHAVVVLGFEAADPGRYGRLVTRGEDLDRIVEWKDATDEERAITLCNSGVICAETHLLFSLVSEVGNANAAGEYYLTDVVALARAKGLSAGVAICDEAETLGVNTRAQLAAAEAEFQRRARAAALEDGVTLTAPDTVFFALDTFLGRDAIVGPNVVFGPGVTVESGAEIRAFCHLEGCHISRGATVGPFARLRPGAELAEDVHVGNFVEIKNAVLDEGVKVGHLTYLGDAHVGEHTNIGAGTVTCNYDGVNKHRTEIGAHAFIGSDTMLVAPVSVGARAMTASGSVITEDVPAEALAVGRARQVTKPGLATRLMEMFRAARDASKKGTN.

The interval 1–231 (MSRPTVSLIV…EAETLGVNTR (231 aa)) is pyrophosphorylase. Residues 11–14 (LAAG), lysine 25, glutamine 78, 83–84 (GT), 106–108 (YGD), glycine 143, glutamate 157, asparagine 172, and asparagine 229 contribute to the UDP-N-acetyl-alpha-D-glucosamine site. A Mg(2+)-binding site is contributed by aspartate 108. Mg(2+) is bound at residue asparagine 229. The segment at 232-252 (AQLAAAEAEFQRRARAAALED) is linker. Residues 253-454 (GVTLTAPDTV…ARDASKKGTN (202 aa)) are N-acetyltransferase. UDP-N-acetyl-alpha-D-glucosamine-binding residues include arginine 318 and lysine 336. Histidine 348 functions as the Proton acceptor in the catalytic mechanism. UDP-N-acetyl-alpha-D-glucosamine contacts are provided by tyrosine 351 and asparagine 362. Acetyl-CoA is bound by residues alanine 365, 371 to 372 (NY), serine 390, serine 408, and arginine 425.

In the N-terminal section; belongs to the N-acetylglucosamine-1-phosphate uridyltransferase family. The protein in the C-terminal section; belongs to the transferase hexapeptide repeat family. Homotrimer. Requires Mg(2+) as cofactor.

The protein resides in the cytoplasm. The catalysed reaction is alpha-D-glucosamine 1-phosphate + acetyl-CoA = N-acetyl-alpha-D-glucosamine 1-phosphate + CoA + H(+). The enzyme catalyses N-acetyl-alpha-D-glucosamine 1-phosphate + UTP + H(+) = UDP-N-acetyl-alpha-D-glucosamine + diphosphate. The protein operates within nucleotide-sugar biosynthesis; UDP-N-acetyl-alpha-D-glucosamine biosynthesis; N-acetyl-alpha-D-glucosamine 1-phosphate from alpha-D-glucosamine 6-phosphate (route II): step 2/2. It functions in the pathway nucleotide-sugar biosynthesis; UDP-N-acetyl-alpha-D-glucosamine biosynthesis; UDP-N-acetyl-alpha-D-glucosamine from N-acetyl-alpha-D-glucosamine 1-phosphate: step 1/1. It participates in bacterial outer membrane biogenesis; LPS lipid A biosynthesis. In terms of biological role, catalyzes the last two sequential reactions in the de novo biosynthetic pathway for UDP-N-acetylglucosamine (UDP-GlcNAc). The C-terminal domain catalyzes the transfer of acetyl group from acetyl coenzyme A to glucosamine-1-phosphate (GlcN-1-P) to produce N-acetylglucosamine-1-phosphate (GlcNAc-1-P), which is converted into UDP-GlcNAc by the transfer of uridine 5-monophosphate (from uridine 5-triphosphate), a reaction catalyzed by the N-terminal domain. The sequence is that of Bifunctional protein GlmU from Cereibacter sphaeroides (strain ATCC 17025 / ATH 2.4.3) (Rhodobacter sphaeroides).